We begin with the raw amino-acid sequence, 661 residues long: UvrABC system protein B (661 aa).

Positions 25 to 182 (AGLSSKKRSQ…NDLINLQYER (158 aa)) constitute a Helicase ATP-binding domain. ATP is bound at residue 38-45 (GITGSGKT). Positions 91–114 (YYDYYQPEAYIARTDTFIEKDSSI) match the Beta-hairpin motif. Positions 430–592 (QVEDLISEIQ…IIPKTINRAI (163 aa)) constitute a Helicase C-terminal domain. Positions 621 to 656 (KTHIDKLKKEMLKAASNLEFEQAVKLRDQLKTLEEA) constitute a UVR domain.

The protein belongs to the UvrB family. Forms a heterotetramer with UvrA during the search for lesions. Interacts with UvrC in an incision complex.

The protein localises to the cytoplasm. Its function is as follows. The UvrABC repair system catalyzes the recognition and processing of DNA lesions. A damage recognition complex composed of 2 UvrA and 2 UvrB subunits scans DNA for abnormalities. Upon binding of the UvrA(2)B(2) complex to a putative damaged site, the DNA wraps around one UvrB monomer. DNA wrap is dependent on ATP binding by UvrB and probably causes local melting of the DNA helix, facilitating insertion of UvrB beta-hairpin between the DNA strands. Then UvrB probes one DNA strand for the presence of a lesion. If a lesion is found the UvrA subunits dissociate and the UvrB-DNA preincision complex is formed. This complex is subsequently bound by UvrC and the second UvrB is released. If no lesion is found, the DNA wraps around the other UvrB subunit that will check the other stand for damage. The polypeptide is UvrABC system protein B (Rickettsia rickettsii (strain Sheila Smith)).